We begin with the raw amino-acid sequence, 148 residues long: UPF0178 protein lpg0089 (148 aa).

This sequence belongs to the UPF0178 family.

This is UPF0178 protein lpg0089 from Legionella pneumophila subsp. pneumophila (strain Philadelphia 1 / ATCC 33152 / DSM 7513).